Here is a 115-residue protein sequence, read N- to C-terminus: Promotilin (115 aa).

Positions 1–25 (MVSRKAVAALLVVHAPAMLASQTEA) are cleaved as a signal peptide. The segment at 40–74 (EKERSKGQKKSLSVWQRSGEEGPVDPAEPIEEEGN) is disordered.

Belongs to the motilin family.

The protein resides in the secreted. Its function is as follows. Plays an important role in the regulation of interdigestive gastrointestinal motility and indirectly causes rhythmic contraction of duodenal and colonic smooth muscle. In Macaca mulatta (Rhesus macaque), this protein is Promotilin (MLN).